The chain runs to 364 residues: Nucleoside ABC transporter permease protein NupB (364 aa).

A run of 8 helical transmembrane segments spans residues 9–29 (LVPL…MLAF), 77–99 (FNIG…ALSF), 105–125 (LLMI…MGFI), 138–158 (VITT…MIHS), 195–215 (TLNI…IIFT), 244–264 (LILS…VYGF), 284–304 (MAVA…ALLF), and 326–346 (VVTA…VMLP).

This sequence belongs to the binding-protein-dependent transport system permease family. In terms of assembly, the complex is composed of two ATP-binding proteins (NupA), two transmembrane proteins (NupB and NupC) and a solute-binding protein (BmpA).

Its subcellular location is the cell membrane. Functionally, part of an ABC transporter complex involved in the uptake of all common nucleosides. Responsible for the translocation of the substrate across the membrane. This chain is Nucleoside ABC transporter permease protein NupB, found in Lactococcus lactis subsp. cremoris (strain MG1363).